Here is a 293-residue protein sequence, read N- to C-terminus: Porphobilinogen deaminase (293 aa).

An S-(dipyrrolylmethanemethyl)cysteine modification is found at Cys235.

The protein belongs to the HMBS family. Monomer. Requires dipyrromethane as cofactor.

The enzyme catalyses 4 porphobilinogen + H2O = hydroxymethylbilane + 4 NH4(+). Its pathway is porphyrin-containing compound metabolism; protoporphyrin-IX biosynthesis; coproporphyrinogen-III from 5-aminolevulinate: step 2/4. Its function is as follows. Tetrapolymerization of the monopyrrole PBG into the hydroxymethylbilane pre-uroporphyrinogen in several discrete steps. In Ruminiclostridium cellulolyticum (strain ATCC 35319 / DSM 5812 / JCM 6584 / H10) (Clostridium cellulolyticum), this protein is Porphobilinogen deaminase.